A 75-amino-acid chain; its full sequence is MASQEDPVQREIHQDWANREYIEVITSSIKKIADFLNSFDMSCRSRLATLNEKLTTLERRIEYIEARVTKGETLT.

A coiled-coil region spans residues 41–72 (MSCRSRLATLNEKLTTLERRIEYIEARVTKGE).

The protein belongs to the BRK1 family.

It is found in the cytoplasm. The protein localises to the cytoskeleton. Its function is as follows. Involved in regulation of actin and microtubule organization. Part of a WAVE complex that activates the Arp2/3 complex. This Xenopus laevis (African clawed frog) protein is Probable protein BRICK1-B (brk1-b).